The sequence spans 316 residues: Pantothenate kinase (316 aa).

95-102 contributes to the ATP binding site; that stretch reads GSVAVGKS.

Belongs to the prokaryotic pantothenate kinase family.

The protein localises to the cytoplasm. The enzyme catalyses (R)-pantothenate + ATP = (R)-4'-phosphopantothenate + ADP + H(+). Its pathway is cofactor biosynthesis; coenzyme A biosynthesis; CoA from (R)-pantothenate: step 1/5. This Salmonella agona (strain SL483) protein is Pantothenate kinase.